Here is a 515-residue protein sequence, read N- to C-terminus: MVLSQEEPDSARGTSEAQPLGPAPTGAAPPPGPGPSDSPEAAVEKVEVELAGPATAEPHEPPEPPEGGWGWLVMLAAMWCNGSVFGIQNACGVLFVSMLETFGSKDDDKMVFKTAWVGSLSMGMIFFCCPIVSVFTDLFGCRKTAVVGAAVGFVGLMSSSFVSSIEPLYLTYGIIFACGCSFAYQPSLVILGHYFKKRLGLVNGIVTAGSSVFTILLPLLLRVLIDSVGLFYTLRVLCIFMFVLFLAGFTYRPLATSTKDKESGGSGSSLFSRKKFSPPKKIFNFAIFKVTAYAVWAVGIPLALFGYFVPYVHLMKHVNERFQDEKNKEVVLMCIGVTSGVGRLLFGRIADYVPGVKKVYLQVLSFFFIGLMSMMIPLCSIFGALIAVCLIMGLFDGCFISIMAPIAFELVGAQDVSQAIGFLLGFMSIPMTVGPPIAGLLRDKLGSYDVAFYLAGVPPLIGGAVLCFIPWIHSKKQREISKTTGKEKMEKMLENQNSLLSSSSGMFKKESDSII.

The interval 1-48 (MVLSQEEPDSARGTSEAQPLGPAPTGAAPPPGPGPSDSPEAAVEKVEV) is disordered. The Cytoplasmic segment spans residues 1–66 (MVLSQEEPDS…EPHEPPEPPE (66 aa)). The span at 17–26 (AQPLGPAPTG) shows a compositional bias: low complexity. Positions 27–36 (AAPPPGPGPS) are enriched in pro residues. A helical transmembrane segment spans residues 67-87 (GGWGWLVMLAAMWCNGSVFGI). The Extracellular segment spans residues 88–114 (QNACGVLFVSMLETFGSKDDDKMVFKT). Residues 115 to 135 (AWVGSLSMGMIFFCCPIVSVF) traverse the membrane as a helical segment. Residues 136-144 (TDLFGCRKT) are Cytoplasmic-facing. A helical membrane pass occupies residues 145–165 (AVVGAAVGFVGLMSSSFVSSI). At 166–171 (EPLYLT) the chain is on the extracellular side. A helical membrane pass occupies residues 172–192 (YGIIFACGCSFAYQPSLVILG). The Cytoplasmic segment spans residues 193–200 (HYFKKRLG). The helical transmembrane segment at 201 to 221 (LVNGIVTAGSSVFTILLPLLL) threads the bilayer. Residues 222-228 (RVLIDSV) are Extracellular-facing. The helical transmembrane segment at 229–249 (GLFYTLRVLCIFMFVLFLAGF) threads the bilayer. Topologically, residues 250–291 (TYRPLATSTKDKESGGSGSSLFSRKKFSPPKKIFNFAIFKVT) are cytoplasmic. Serine 263 carries the post-translational modification Phosphoserine. A helical membrane pass occupies residues 292–312 (AYAVWAVGIPLALFGYFVPYV). Residues 313–329 (HLMKHVNERFQDEKNKE) lie on the Extracellular side of the membrane. A helical membrane pass occupies residues 330 to 350 (VVLMCIGVTSGVGRLLFGRIA). Residue aspartate 351 is a topological domain, cytoplasmic. Residues 352 to 372 (YVPGVKKVYLQVLSFFFIGLM) traverse the membrane as a helical segment. At 373–396 (SMMIPLCSIFGALIAVCLIMGLFD) the chain is on the extracellular side. Residues 397–417 (GCFISIMAPIAFELVGAQDVS) traverse the membrane as a helical segment. Over 418 to 419 (QA) the chain is Cytoplasmic. A helical membrane pass occupies residues 420–440 (IGFLLGFMSIPMTVGPPIAGL). The Extracellular segment spans residues 441–451 (LRDKLGSYDVA). Residues 452-472 (FYLAGVPPLIGGAVLCFIPWI) form a helical membrane-spanning segment. Residues 473–515 (HSKKQREISKTTGKEKMEKMLENQNSLLSSSSGMFKKESDSII) lie on the Cytoplasmic side of the membrane. 4 positions are modified to phosphoserine: serine 498, serine 501, serine 503, and serine 504.

Belongs to the major facilitator superfamily. Monocarboxylate porter (TC 2.A.1.13) family. Not N-glycosylated. Strongly expressed in kidney and skeletal muscle and at lower level in placenta and heart.

It localises to the cell membrane. The protein resides in the basolateral cell membrane. The catalysed reaction is 3,3',5-triiodo-L-thyronine(out) = 3,3',5-triiodo-L-thyronine(in). The enzyme catalyses L-thyroxine(out) = L-thyroxine(in). It catalyses the reaction L-tryptophan(in) = L-tryptophan(out). It carries out the reaction L-tyrosine(in) = L-tyrosine(out). The catalysed reaction is L-phenylalanine(in) = L-phenylalanine(out). Its function is as follows. Sodium- and proton-independent thyroid hormones and aromatic acids transporter. Mediates both uptake and efflux of 3,5,3'-triiodothyronine (T3) and 3,5,3',5'-tetraiodothyronine (T4) with high affinity, suggesting a role in the homeostasis of thyroid hormone levels. Responsible for low affinity bidirectional transport of the aromatic amino acids, such as phenylalanine, tyrosine, tryptophan and L-3,4-dihydroxyphenylalanine (L-dopa). Plays an important role in homeostasis of aromatic amino acids. The sequence is that of Monocarboxylate transporter 10 (SLC16A10) from Homo sapiens (Human).